A 73-amino-acid polypeptide reads, in one-letter code: UPF0235 protein LBL_1291 (73 aa).

This sequence belongs to the UPF0235 family.

This is UPF0235 protein LBL_1291 from Leptospira borgpetersenii serovar Hardjo-bovis (strain L550).